The primary structure comprises 192 residues: Thymidine kinase (192 aa).

ATP contacts are provided by residues Ser-9–Ser-16 and Asp-87–Gln-90. Glu-88 acts as the Proton acceptor in catalysis. Zn(2+)-binding residues include Cys-145, Cys-147, Cys-182, and His-185.

The protein belongs to the thymidine kinase family. As to quaternary structure, homotetramer.

It is found in the cytoplasm. The enzyme catalyses thymidine + ATP = dTMP + ADP + H(+). The polypeptide is Thymidine kinase (Vibrio parahaemolyticus serotype O3:K6 (strain RIMD 2210633)).